We begin with the raw amino-acid sequence, 210 residues long: MQNRPIIIGVTGGSGGGKTSVSRAILSNFPNEKIAMIEHDSYYKDQSHLTFEERIKTNYDHPFAFDTDLMIEQIKELLAGRPVDIPTYDYTEHTRSSKTYRQEPKDVFIVEGILVLEDQRLRDLMDIKIFVDTDDDVRIIRRIKRDMEERGRSLDSVIEQYLGVVKPMYHQFIEPTKRYADVIIPEGASNKVAIDLITTKIEKILKEARN.

12 to 19 (GGSGGGKT) is an ATP binding site.

This sequence belongs to the uridine kinase family.

The protein localises to the cytoplasm. The enzyme catalyses uridine + ATP = UMP + ADP + H(+). It catalyses the reaction cytidine + ATP = CMP + ADP + H(+). It functions in the pathway pyrimidine metabolism; CTP biosynthesis via salvage pathway; CTP from cytidine: step 1/3. It participates in pyrimidine metabolism; UMP biosynthesis via salvage pathway; UMP from uridine: step 1/1. The polypeptide is Uridine kinase (Streptococcus gordonii (strain Challis / ATCC 35105 / BCRC 15272 / CH1 / DL1 / V288)).